Reading from the N-terminus, the 173-residue chain is Myeloid-derived growth factor (173 aa).

Residues 1 to 31 form the signal peptide; sequence MAAPSGGWNGVGASLWAALLLGAVALRPAEA.

Belongs to the MYDGF family. As to expression, expressed in eosinophils (at protein level). Expressed in bone marrow cells. Expressed in synovial tissue. Found in synovial fluid of patients with arthropaties.

It localises to the secreted. The protein localises to the endoplasmic reticulum-Golgi intermediate compartment. The protein resides in the endoplasmic reticulum. Its subcellular location is the golgi apparatus. Its function is as follows. Bone marrow-derived monocyte and paracrine-acting protein that promotes cardiac myocyte survival and adaptive angiogenesis for cardiac protection and/or repair after myocardial infarction (MI). Stimulates endothelial cell proliferation through a MAPK1/3-, STAT3- and CCND1-mediated signaling pathway. Inhibits cardiac myocyte apoptosis in a PI3K/AKT-dependent signaling pathway. Involved in endothelial cell proliferation and angiogenesis. The sequence is that of Myeloid-derived growth factor from Homo sapiens (Human).